The sequence spans 76 residues: Large ribosomal subunit protein bL31 (76 aa).

The protein belongs to the bacterial ribosomal protein bL31 family. Type A subfamily. As to quaternary structure, part of the 50S ribosomal subunit.

Functionally, binds the 23S rRNA. This chain is Large ribosomal subunit protein bL31 (rpmE), found in Pelagibacter ubique (strain HTCC1062).